A 137-amino-acid polypeptide reads, in one-letter code: Ribosome-binding factor A (137 aa).

This sequence belongs to the RbfA family. Monomer. Binds 30S ribosomal subunits, but not 50S ribosomal subunits or 70S ribosomes.

The protein localises to the cytoplasm. In terms of biological role, one of several proteins that assist in the late maturation steps of the functional core of the 30S ribosomal subunit. Associates with free 30S ribosomal subunits (but not with 30S subunits that are part of 70S ribosomes or polysomes). Required for efficient processing of 16S rRNA. May interact with the 5'-terminal helix region of 16S rRNA. The protein is Ribosome-binding factor A of Trichodesmium erythraeum (strain IMS101).